The sequence spans 116 residues: Large ribosomal subunit protein bL19 (116 aa).

The protein belongs to the bacterial ribosomal protein bL19 family.

This protein is located at the 30S-50S ribosomal subunit interface and may play a role in the structure and function of the aminoacyl-tRNA binding site. This Clostridium novyi (strain NT) protein is Large ribosomal subunit protein bL19.